Reading from the N-terminus, the 412-residue chain is Subtilisin-like protease 6 (412 aa).

Positions Met1–Gly20 are cleaved as a signal peptide. Residues Ala21 to Asn126 constitute a propeptide that is removed on maturation. An Inhibitor I9 domain is found at Lys36 to Thr120. Residues Asn123 and Asn126 are each glycosylated (N-linked (GlcNAc...) asparagine). Positions Ser135 to Lys412 constitute a Peptidase S8 domain. Active-site charge relay system residues include Asp167 and His198. N-linked (GlcNAc...) asparagine glycosylation is found at Asn252 and Asn264. Residue Ser358 is the Charge relay system of the active site. Asn408 is a glycosylation site (N-linked (GlcNAc...) asparagine).

The protein belongs to the peptidase S8 family.

Its subcellular location is the secreted. Secreted subtilisin-like serine protease with keratinolytic activity that contributes to pathogenicity. The sequence is that of Subtilisin-like protease 6 (SUB6) from Trichophyton equinum (Horse ringworm fungus).